Consider the following 171-residue polypeptide: L-methionine sulfoximine/L-methionine sulfone acetyltransferase (171 aa).

The 163-residue stretch at 1–163 (MTIRFADKAD…DLTFMQLQLD (163 aa)) folds into the N-acetyltransferase domain. Residues 72-74 (RSF) and 82-84 (EHS) contribute to the substrate site. Acetyl-CoA-binding positions include 85-87 (VYV), 93-98 (GKGLGR), Asn124, and Ser133.

Homodimer.

It carries out the reaction L-methionine sulfoximine + acetyl-CoA = N-acetyl-L-methionine sulfoximine + CoA + H(+). It catalyses the reaction L-methionine sulfone + acetyl-CoA = N-acetyl-L-methionine sulfone + CoA + H(+). In terms of biological role, plays a role in the resistance against the toxic effects of L-methionine sulfoximine (MSX), a rare amino acid which inhibits glutamine synthetase (GlnA). Catalyzes the acetylation of MSX. It can also use L-methionine sulfone (MSO). Also catalyzes the acylation of free L-amino acids using an acyl-CoA as acyl donor. This is L-methionine sulfoximine/L-methionine sulfone acetyltransferase (yncA) from Salmonella typhimurium (strain LT2 / SGSC1412 / ATCC 700720).